The sequence spans 131 residues: Small ribosomal subunit protein eS17 (131 aa).

The protein belongs to the eukaryotic ribosomal protein eS17 family.

This is Small ribosomal subunit protein eS17 (RPS17) from Theileria annulata.